Consider the following 359-residue polypeptide: Probably inactive receptor-like protein kinase At5g41680 (359 aa).

One can recognise a Protein kinase domain in the interval 59–357 (AASAEILGKG…KLIQDIPTNF (299 aa)). ATP-binding positions include 65 to 73 (LGKGAHVTT) and Lys87.

Belongs to the protein kinase superfamily. Ser/Thr protein kinase family.

This chain is Probably inactive receptor-like protein kinase At5g41680, found in Arabidopsis thaliana (Mouse-ear cress).